Consider the following 748-residue polypeptide: Methylmalonyl-CoA mutase, mitochondrial (748 aa).

A mitochondrion-targeting transit peptide spans Met1 to Leu30. Gln48 is a malonyl-CoA binding site. An N6-acetyllysine modification is found at Lys87. Malonyl-CoA contacts are provided by residues Tyr94–Met97 and Thr104–Tyr108. Position 210 is an N6-acetyllysine (Lys210). Malonyl-CoA is bound by residues Thr214 to Gln216, Arg226, Lys253, His263, and Arg302 to Ser304. The residue at position 333 (Lys333) is an N6-acetyllysine. Lys341 bears the N6-succinyllysine mark. Residue Ser479 is modified to Phosphoserine. N6-succinyllysine is present on Lys593. Lys600 bears the N6-acetyllysine mark. Residues Arg612–Lys744 enclose the B12-binding domain. Residue His625 coordinates adenosylcob(III)alamin.

The protein belongs to the methylmalonyl-CoA mutase family. As to quaternary structure, homodimer. Interacts (the apoenzyme form) with MMAA; the interaction is GTP dependent. The cofactor is adenosylcob(III)alamin.

Its subcellular location is the mitochondrion matrix. The protein resides in the mitochondrion. It is found in the cytoplasm. The enzyme catalyses (R)-methylmalonyl-CoA = succinyl-CoA. Inhibited by itaconyl-CoA, a metabolite that inactivates the coenzyme B12 cofactor. Catalyzes the reversible isomerization of methylmalonyl-CoA (MMCoA) (generated from branched-chain amino acid metabolism and degradation of dietary odd chain fatty acids and cholesterol) to succinyl-CoA (3-carboxypropionyl-CoA), a key intermediate of the tricarboxylic acid cycle. The protein is Methylmalonyl-CoA mutase, mitochondrial (Mmut) of Mus musculus (Mouse).